Reading from the N-terminus, the 193-residue chain is Large ribosomal subunit protein eL19B (193 aa).

The segment at 157 to 179 is disordered; it reads EQQDARRARAKAARQRRAKAVEE. The segment covering 164–174 has biased composition (basic residues); sequence ARAKAARQRRA.

This sequence belongs to the eukaryotic ribosomal protein eL19 family. In terms of assembly, component of the large ribosomal subunit (LSU). Mature yeast ribosomes consist of a small (40S) and a large (60S) subunit. The 40S small subunit contains 1 molecule of ribosomal RNA (18S rRNA) and at least 33 different proteins. The large 60S subunit contains 3 rRNA molecules (25S, 5.8S and 5S rRNA) and at least 46 different proteins. eL19 lies in close proximity to the binding site for eukaryotic initiation factor eIF4G.

Its subcellular location is the cytoplasm. Component of the ribosome, a large ribonucleoprotein complex responsible for the synthesis of proteins in the cell. The small ribosomal subunit (SSU) binds messenger RNAs (mRNAs) and translates the encoded message by selecting cognate aminoacyl-transfer RNA (tRNA) molecules. The large subunit (LSU) contains the ribosomal catalytic site termed the peptidyl transferase center (PTC), which catalyzes the formation of peptide bonds, thereby polymerizing the amino acids delivered by tRNAs into a polypeptide chain. The nascent polypeptides leave the ribosome through a tunnel in the LSU and interact with protein factors that function in enzymatic processing, targeting, and the membrane insertion of nascent chains at the exit of the ribosomal tunnel. eL19 may play a role in the last stages of translation initiation, in particular subunit joining and shedding/releasing factors. The protein is Large ribosomal subunit protein eL19B (rpl1902) of Schizosaccharomyces pombe (strain 972 / ATCC 24843) (Fission yeast).